Reading from the N-terminus, the 443-residue chain is KICSTOR complex protein ITFG2 (443 aa).

The FG-GAP 1; atypical repeat unit spans residues 19–48 (FPHAICLGDVDNDALNELVVGDTSGKLSVY). Serine 104 is modified (phosphoserine). An FG-GAP 2; atypical repeat occupies 125-154 (NTKVMLISDIDGDGCYELVVGYTDRVVRAF). Serine 219 carries the post-translational modification Phosphoserine.

As to quaternary structure, part of the KICSTOR complex composed of KPTN, ITFG2, KICS2 and SZT2. SZT2 probably serves as a link between the other three proteins in the KICSTOR complex and may mediate the direct interaction with the GATOR complex via GATOR1. The KICSTOR complex interacts directly with the GATOR1 complex and most probably indirectly with the GATOR2 complex in an amino acid-independent manner.

Its subcellular location is the lysosome membrane. Its function is as follows. As part of the KICSTOR complex functions in the amino acid-sensing branch of the TORC1 signaling pathway. Recruits, in an amino acid-independent manner, the GATOR1 complex to the lysosomal membranes and allows its interaction with GATOR2 and the RAG GTPases. Functions upstream of the RAG GTPases and is required to negatively regulate mTORC1 signaling in absence of amino acids. In absence of the KICSTOR complex mTORC1 is constitutively localized to the lysosome and activated. The KICSTOR complex is also probably involved in the regulation of mTORC1 by glucose. In Mus musculus (Mouse), this protein is KICSTOR complex protein ITFG2.